The chain runs to 381 residues: Chaperone protein DnaJ (381 aa).

The region spanning 5-70 is the J domain; the sequence is DFYEVLGVSR…QKKAAYDQYG (66 aa). The segment at 136 to 214 adopts a CR-type zinc-finger fold; that stretch reads GVSKEIEVPT…CHGQGRKQKT (79 aa). Positions 149, 152, 166, 169, 188, 191, 202, and 205 each coordinate Zn(2+). 4 CXXCXGXG motif repeats span residues 149–156, 166–173, 188–195, and 202–209; these read CDTCEGTG, CGTCHGHG, CPTCHGKG, and CNVCHGQG.

This sequence belongs to the DnaJ family. Homodimer. Zn(2+) serves as cofactor.

Its subcellular location is the cytoplasm. Participates actively in the response to hyperosmotic and heat shock by preventing the aggregation of stress-denatured proteins and by disaggregating proteins, also in an autonomous, DnaK-independent fashion. Unfolded proteins bind initially to DnaJ; upon interaction with the DnaJ-bound protein, DnaK hydrolyzes its bound ATP, resulting in the formation of a stable complex. GrpE releases ADP from DnaK; ATP binding to DnaK triggers the release of the substrate protein, thus completing the reaction cycle. Several rounds of ATP-dependent interactions between DnaJ, DnaK and GrpE are required for fully efficient folding. Also involved, together with DnaK and GrpE, in the DNA replication of plasmids through activation of initiation proteins. This Vibrio vulnificus (strain CMCP6) protein is Chaperone protein DnaJ.